Here is a 704-residue protein sequence, read N- to C-terminus: Mannan-binding lectin serine protease 1 (704 aa).

Residues 1 to 24 form the signal peptide; sequence MRFLSFWRLLLYHALCLALPEVSA. In terms of domain architecture, CUB 1 spans 25–143; sequence HTVELNEMFG…TGFDAHYMAV (119 aa). Residues 25–189 are homodimerization; the sequence is HTVELNEMFG…HTDNRTCRVE (165 aa). The interaction with MBL2 stretch occupies residues 25 to 189; it reads HTVELNEMFG…HTDNRTCRVE (165 aa). The segment at 25-283 is interaction with FCN2; it reads HTVELNEMFG…STQTHSVQIL (259 aa). The tract at residues 25–305 is interaction with MBL1; the sequence is HTVELNEMFG…RLSYRAAGNE (281 aa). N-linked (GlcNAc...) asparagine glycosylation occurs at N54. 7 residues coordinate Ca(2+): E73, D81, D126, S128, D144, V145, and E147. Residues C78 and C96 are joined by a disulfide bond. One can recognise an EGF-like; calcium-binding domain in the interval 144-187; sequence DVDECKEREDEELSCDHYCHNYIGGYYCSCRFGYILHTDNRTCR. Intrachain disulfides connect C148–C162, C158–C171, C173–C186, and C190–C217. 3 residues coordinate Ca(2+): N164, Y165, and G168. Position 164 is a (3R)-3-hydroxyasparagine (N164). An N-linked (GlcNAc...) asparagine glycan is attached at N183. The region spanning 190-302 is the CUB 2 domain; it reads CSGNLFTQRT…RGWRLSYRAA (113 aa). Ca(2+) contacts are provided by E240, D250, D287, and S289. C247 and C265 are joined by a disulfide. Sushi domains lie at 304 to 369 and 370 to 439; these read NECP…TCKI and VDCG…TCLP. 8 disulfides stabilise this stretch: C306–C354, C334–C367, C372–C419, C402–C437, C441–C577, C480–C496, C619–C636, and C647–C677. N-linked (GlcNAc...) asparagine glycans are attached at residues N390 and N412. One can recognise a Peptidase S1 domain in the interval 454–701; the sequence is IFNGRPAQKG…NKDWIQRITG (248 aa). Residues H495 and D557 each act as charge relay system in the active site. S651 functions as the Charge relay system in the catalytic mechanism.

It belongs to the peptidase S1 family. Homodimer. Interacts with the oligomeric lectins MBL2, FCN2 and FCN3; triggers the lectin pathway of complement through activation of C3. Interacts with SERPING1. Interacts with COLEC11; probably triggers the lectin pathway of complement. The iron and 2-oxoglutarate dependent 3-hydroxylation of aspartate and asparagine is (R) stereospecific within EGF domains. Post-translationally, N-glycosylated. Some N-linked glycan are of the complex-type. In terms of processing, autoproteolytic processing of the proenzyme produces the active enzyme composed on the heavy and the light chain held together by a disulfide bond. Isoform 1 but not isoform 2 is activated through autoproteolytic processing. In terms of tissue distribution, protein of the plasma which is primarily expressed by liver.

The protein resides in the secreted. Inhibited by SERPING1 and A2M. Its function is as follows. Functions in the lectin pathway of complement, which performs a key role in innate immunity by recognizing pathogens through patterns of sugar moieties and neutralizing them. The lectin pathway is triggered upon binding of mannan-binding lectin (MBL) and ficolins to sugar moieties which leads to activation of the associated proteases MASP1 and MASP2. Functions as an endopeptidase and may activate MASP2 or C2 or directly activate C3 the key component of complement reaction. Isoform 2 may have an inhibitory effect on the activation of the lectin pathway of complement or may cleave IGFBP5. Also plays a role in development. In Mus musculus (Mouse), this protein is Mannan-binding lectin serine protease 1 (Masp1).